We begin with the raw amino-acid sequence, 160 residues long: Putative antiporter subunit mnhE2 (160 aa).

Helical transmembrane passes span 22 to 42 (HFKF…IYIL), 55 to 75 (IWVA…SSIS), and 100 to 120 (SDWA…STVI).

This sequence belongs to the CPA3 antiporters (TC 2.A.63) subunit E family. As to quaternary structure, may form a heterooligomeric complex that consists of seven subunits: mnhA2, mnhB2, mnhC2, mnhD2, mnhE2, mnhF2 and mnhG2.

It localises to the cell membrane. This Staphylococcus aureus (strain Mu3 / ATCC 700698) protein is Putative antiporter subunit mnhE2 (mnhE2).